A 269-amino-acid polypeptide reads, in one-letter code: NAD-capped RNA hydrolase NudC (269 aa).

A substrate-binding site is contributed by Arg81. Residues Cys110, Cys113, Cys128, and Cys131 each contribute to the Zn(2+) site. Residue Tyr136 participates in substrate binding. The 124-residue stretch at 137 to 260 folds into the Nudix hydrolase domain; that stretch reads PRIFPCIIVA…TIARALIEQT (124 aa). A divalent metal cation is bound by residues Ala170, Glu186, and Glu190. The short motif at 171–192 is the Nudix box element; it reads GFVEVGETLEQCVAREVLEETG. A substrate-binding site is contributed by 204 to 211; sequence QPWAFPSS. Position 231 (Glu231) interacts with a divalent metal cation. Substrate is bound at residue Ala253.

It belongs to the Nudix hydrolase family. NudC subfamily. As to quaternary structure, homodimer. Mg(2+) is required as a cofactor. The cofactor is Mn(2+). It depends on Zn(2+) as a cofactor.

The catalysed reaction is a 5'-end NAD(+)-phospho-ribonucleoside in mRNA + H2O = a 5'-end phospho-adenosine-phospho-ribonucleoside in mRNA + beta-nicotinamide D-ribonucleotide + 2 H(+). The enzyme catalyses NAD(+) + H2O = beta-nicotinamide D-ribonucleotide + AMP + 2 H(+). It catalyses the reaction NADH + H2O = reduced beta-nicotinamide D-ribonucleotide + AMP + 2 H(+). Functionally, mRNA decapping enzyme that specifically removes the nicotinamide adenine dinucleotide (NAD) cap from a subset of mRNAs by hydrolyzing the diphosphate linkage to produce nicotinamide mononucleotide (NMN) and 5' monophosphate mRNA. The NAD-cap is present at the 5'-end of some mRNAs and stabilizes RNA against 5'-processing. Has preference for mRNAs with a 5'-end purine. Catalyzes the hydrolysis of a broad range of dinucleotide pyrophosphates. This chain is NAD-capped RNA hydrolase NudC, found in Vibrio cholerae serotype O1 (strain ATCC 39315 / El Tor Inaba N16961).